The chain runs to 268 residues: Tryptophan synthase alpha chain (268 aa).

Residues Glu-49 and Asp-60 each act as proton acceptor in the active site.

Belongs to the TrpA family. Tetramer of two alpha and two beta chains.

The catalysed reaction is (1S,2R)-1-C-(indol-3-yl)glycerol 3-phosphate + L-serine = D-glyceraldehyde 3-phosphate + L-tryptophan + H2O. The protein operates within amino-acid biosynthesis; L-tryptophan biosynthesis; L-tryptophan from chorismate: step 5/5. Functionally, the alpha subunit is responsible for the aldol cleavage of indoleglycerol phosphate to indole and glyceraldehyde 3-phosphate. The chain is Tryptophan synthase alpha chain from Salmonella typhimurium (strain LT2 / SGSC1412 / ATCC 700720).